The primary structure comprises 900 residues: Endoglucanase H (900 aa).

The first 44 residues, 1–44 (MKKRLLVSFLVLSIIVGLLSFQSLGNYNSGLKIGAWVGTQPSES), serve as a signal peptide directing secretion. The GH26 domain occupies 45–298 (AIKSFQELQG…NSSPEALAAY (254 aa)). The active-site Proton donor is the Glu131. Residue Glu244 is the Nucleophile of the active site. Positions 300-630 (EAIGAGSSNP…DTEILNALFN (331 aa)) are catalytic. Residues 303 to 326 (GAGSSNPTPTPTWTSTPPSSSPKA) are disordered. The span at 306 to 324 (SSNPTPTPTWTSTPPSSSP) shows a compositional bias: low complexity. The Proton donor role is filled by Glu460. The active-site Nucleophile is Glu565. The region spanning 655–900 (AVGEKMLDDF…LLKAISEIPI (246 aa)) is the CBM11 domain. Positions 827–900 (PSIKHGDLNF…LLKAISEIPI (74 aa)) constitute a Dockerin domain.

It in the N-terminal section; belongs to the glycosyl hydrolase 5 (cellulase A) family. In the C-terminal section; belongs to the glycosyl hydrolase 26 family.

The catalysed reaction is Endohydrolysis of (1-&gt;4)-beta-D-glucosidic linkages in cellulose, lichenin and cereal beta-D-glucans.. In terms of biological role, this enzyme catalyzes the endohydrolysis of 1,4-beta-glucosidic linkages in cellulose, lichenin and cereal beta-D-glucans. The polypeptide is Endoglucanase H (celH) (Acetivibrio thermocellus (strain ATCC 27405 / DSM 1237 / JCM 9322 / NBRC 103400 / NCIMB 10682 / NRRL B-4536 / VPI 7372) (Clostridium thermocellum)).